A 423-amino-acid chain; its full sequence is Aspartate--tRNA(Asp) ligase (423 aa).

Glutamate 163 contributes to the L-aspartate binding site. Residues 185–188 (QLYK) are aspartate. Arginine 207 contacts L-aspartate. Residues 207-209 (RAE), 215-217 (RHL), and glutamate 346 each bind ATP. Residues glutamate 346 and serine 349 each contribute to the Mg(2+) site. Positions 349 and 353 each coordinate L-aspartate. 394-397 (GLER) is a binding site for ATP.

The protein belongs to the class-II aminoacyl-tRNA synthetase family. Type 2 subfamily. In terms of assembly, homodimer. Requires Mg(2+) as cofactor.

The protein resides in the cytoplasm. The enzyme catalyses tRNA(Asp) + L-aspartate + ATP = L-aspartyl-tRNA(Asp) + AMP + diphosphate. Functionally, catalyzes the attachment of L-aspartate to tRNA(Asp) in a two-step reaction: L-aspartate is first activated by ATP to form Asp-AMP and then transferred to the acceptor end of tRNA(Asp). The polypeptide is Aspartate--tRNA(Asp) ligase (Picrophilus torridus (strain ATCC 700027 / DSM 9790 / JCM 10055 / NBRC 100828 / KAW 2/3)).